The sequence spans 391 residues: Protein kinase ORF14 (391 aa).

The Protein kinase domain maps to 109-391 (VPLRHTRGNI…ETLVDEFSKI (283 aa)). Residue lysine 134 coordinates ATP. The active-site Proton acceptor is aspartate 235.

The protein belongs to the protein kinase superfamily. Ser/Thr protein kinase family.

It carries out the reaction L-seryl-[protein] + ATP = O-phospho-L-seryl-[protein] + ADP + H(+). The enzyme catalyses L-threonyl-[protein] + ATP = O-phospho-L-threonyl-[protein] + ADP + H(+). This Ictalurid herpesvirus 1 (strain Auburn) (IcHV-1) protein is Protein kinase ORF14 (ORF14).